Consider the following 294-residue polypeptide: Universal stress protein MSMEG_3950/MSMEI_3859 (294 aa).

Gly-13 serves as a coordination point for ATP. Lys-109 participates in a covalent cross-link: Isoglutamyl lysine isopeptide (Lys-Gln) (interchain with Q-Cter in protein Pup). Residues 117–123, 131–132, Gly-164, Asp-197, 261–267, and 275–277 each bind ATP; these read GNRGMGA, ST, GSHGRGG, and SVS.

The protein belongs to the universal stress protein A family.

The sequence is that of Universal stress protein MSMEG_3950/MSMEI_3859 from Mycolicibacterium smegmatis (strain ATCC 700084 / mc(2)155) (Mycobacterium smegmatis).